The following is a 312-amino-acid chain: Glyoxylate/hydroxypyruvate reductase A (312 aa).

The active site involves Arg-227. Catalysis depends on His-275, which acts as the Proton donor.

It belongs to the D-isomer specific 2-hydroxyacid dehydrogenase family. GhrA subfamily.

Its subcellular location is the cytoplasm. The catalysed reaction is glycolate + NADP(+) = glyoxylate + NADPH + H(+). It catalyses the reaction (R)-glycerate + NAD(+) = 3-hydroxypyruvate + NADH + H(+). It carries out the reaction (R)-glycerate + NADP(+) = 3-hydroxypyruvate + NADPH + H(+). In terms of biological role, catalyzes the NADPH-dependent reduction of glyoxylate and hydroxypyruvate into glycolate and glycerate, respectively. The chain is Glyoxylate/hydroxypyruvate reductase A from Salmonella paratyphi C (strain RKS4594).